We begin with the raw amino-acid sequence, 60 residues long: UPF0337 protein asr1134 (60 aa).

2 stretches are compositionally biased toward basic and acidic residues: residues 1–18 (MSLE…EGKA) and 29–60 (PEDK…KKID). Residues 1–60 (MSLEDRAKATGKNIEGKAQEALGNVTGDPEDKAEGKAKQAESEVRHGVEDVKDNVKKKID) are disordered.

It belongs to the UPF0337 (CsbD) family.

The protein is UPF0337 protein asr1134 of Nostoc sp. (strain PCC 7120 / SAG 25.82 / UTEX 2576).